A 119-amino-acid chain; its full sequence is Large ribosomal subunit protein bL20 (119 aa).

This sequence belongs to the bacterial ribosomal protein bL20 family.

Functionally, binds directly to 23S ribosomal RNA and is necessary for the in vitro assembly process of the 50S ribosomal subunit. It is not involved in the protein synthesizing functions of that subunit. This is Large ribosomal subunit protein bL20 from Listeria innocua serovar 6a (strain ATCC BAA-680 / CLIP 11262).